The primary structure comprises 333 residues: Protein FAM170A (333 aa).

Disordered stretches follow at residues Met1–Glu45, Leu73–Lys107, and Glu143–Pro214. The segment covering Leu10–His29 has biased composition (basic and acidic residues). Residues Thr92–Ser105 are compositionally biased toward low complexity. A compositionally biased stretch (basic and acidic residues) spans Glu143 to Glu156. The span at Ser170–Ser179 shows a compositional bias: polar residues. The span at Gly185 to Ser196 shows a compositional bias: basic and acidic residues. Thr213 bears the Phosphothreonine mark. The C2H2-type; degenerate zinc-finger motif lies at Phe224–Arg248. The disordered stretch occupies residues Met267–Ser333. The span at Ser271 to Glu281 shows a compositional bias: acidic residues. A compositionally biased stretch (basic and acidic residues) spans Glu282–Glu293. At Ser308 the chain carries Phosphoserine.

The protein belongs to the FAM170 family. In terms of tissue distribution, testis-specific.

The protein localises to the nucleus. Its function is as follows. Acts as a nuclear transcription factor that positively regulates the expression of heat shock genes. Binds to heat shock promoter elements (HSE). The chain is Protein FAM170A (Fam170a) from Mus musculus (Mouse).